The chain runs to 585 residues: A-type ATP synthase subunit A (585 aa).

231 to 238 (GPFGSGKT) is a binding site for ATP.

The protein belongs to the ATPase alpha/beta chains family. In terms of assembly, has multiple subunits with at least A(3), B(3), C, D, E, F, H, I and proteolipid K(x).

Its subcellular location is the cell membrane. It carries out the reaction ATP + H2O + 4 H(+)(in) = ADP + phosphate + 5 H(+)(out). In terms of biological role, component of the A-type ATP synthase that produces ATP from ADP in the presence of a proton gradient across the membrane. The A chain is the catalytic subunit. The chain is A-type ATP synthase subunit A from Thermococcus gammatolerans (strain DSM 15229 / JCM 11827 / EJ3).